The primary structure comprises 35 residues: Photosystem II reaction center protein T (35 aa).

The chain crosses the membrane as a helical span at residues 3–23; the sequence is ALVYTFLLVSTLGIIFFAIFF.

Belongs to the PsbT family. PSII is composed of 1 copy each of membrane proteins PsbA, PsbB, PsbC, PsbD, PsbE, PsbF, PsbH, PsbI, PsbJ, PsbK, PsbL, PsbM, PsbT, PsbY, PsbZ, Psb30/Ycf12, at least 3 peripheral proteins of the oxygen-evolving complex and a large number of cofactors. It forms dimeric complexes.

It localises to the plastid. It is found in the chloroplast thylakoid membrane. Its function is as follows. Found at the monomer-monomer interface of the photosystem II (PS II) dimer, plays a role in assembly and dimerization of PSII. PSII is a light-driven water plastoquinone oxidoreductase, using light energy to abstract electrons from H(2)O, generating a proton gradient subsequently used for ATP formation. This chain is Photosystem II reaction center protein T, found in Amborella trichopoda.